The primary structure comprises 557 residues: Inositol-3-phosphate synthase 1 (557 aa).

21 residues coordinate NAD(+): Gly67, Gly68, Asn69, Asn70, Asp141, Ser177, Val178, Gln188, Arg191, Thr228, Ala229, Asn230, Thr231, Gly278, Ser279, Asp303, Ser306, Asn337, Asn338, Asp339, and Lys352. Position 279 is a phosphoserine (Ser279). Residue Ser357 is modified to Phosphoserine. Gly390, Asp391, Asp419, and Ser420 together coordinate NAD(+). The residue at position 523 (Ser523) is a Phosphoserine. The segment at 527 to 557 (CKKGSAPTAPNGCTGDANGHSQAEAPQMPTT) is disordered.

The protein belongs to the myo-inositol 1-phosphate synthase family. It depends on NAD(+) as a cofactor. As to expression, expressed in testis (at protein level).

Its subcellular location is the cytoplasm. The catalysed reaction is D-glucose 6-phosphate = 1D-myo-inositol 3-phosphate. It functions in the pathway polyol metabolism; myo-inositol biosynthesis; myo-inositol from D-glucose 6-phosphate: step 1/2. Functionally, key enzyme in myo-inositol biosynthesis pathway that catalyzes the conversion of glucose 6-phosphate to 1-myo-inositol 1-phosphate in a NAD-dependent manner. Rate-limiting enzyme in the synthesis of all inositol-containing compounds. The chain is Inositol-3-phosphate synthase 1 (ISYNA1) from Bos taurus (Bovine).